The primary structure comprises 89 residues: Small ribosomal subunit protein uS15 (89 aa).

It belongs to the universal ribosomal protein uS15 family. In terms of assembly, part of the 30S ribosomal subunit. Forms a bridge to the 50S subunit in the 70S ribosome, contacting the 23S rRNA.

In terms of biological role, one of the primary rRNA binding proteins, it binds directly to 16S rRNA where it helps nucleate assembly of the platform of the 30S subunit by binding and bridging several RNA helices of the 16S rRNA. Its function is as follows. Forms an intersubunit bridge (bridge B4) with the 23S rRNA of the 50S subunit in the ribosome. The protein is Small ribosomal subunit protein uS15 of Tolumonas auensis (strain DSM 9187 / NBRC 110442 / TA 4).